A 283-amino-acid chain; its full sequence is Pantothenate synthetase (283 aa).

30-37 (MGYLHEGH) is an ATP binding site. His37 functions as the Proton donor in the catalytic mechanism. Gln61 is a (R)-pantoate binding site. A beta-alanine-binding site is contributed by Gln61. 147-150 (GQKD) contacts ATP. Gln153 lines the (R)-pantoate pocket. Residues Val176 and 184 to 187 (MSSR) contribute to the ATP site.

It belongs to the pantothenate synthetase family. In terms of assembly, homodimer.

The protein resides in the cytoplasm. The catalysed reaction is (R)-pantoate + beta-alanine + ATP = (R)-pantothenate + AMP + diphosphate + H(+). Its pathway is cofactor biosynthesis; (R)-pantothenate biosynthesis; (R)-pantothenate from (R)-pantoate and beta-alanine: step 1/1. Catalyzes the condensation of pantoate with beta-alanine in an ATP-dependent reaction via a pantoyl-adenylate intermediate. This chain is Pantothenate synthetase, found in Thermoanaerobacter sp. (strain X514).